Here is a 408-residue protein sequence, read N- to C-terminus: Histidine--tRNA ligase (408 aa).

The protein belongs to the class-II aminoacyl-tRNA synthetase family. As to quaternary structure, homodimer.

It is found in the cytoplasm. The enzyme catalyses tRNA(His) + L-histidine + ATP = L-histidyl-tRNA(His) + AMP + diphosphate + H(+). The protein is Histidine--tRNA ligase of Campylobacter jejuni subsp. jejuni serotype O:2 (strain ATCC 700819 / NCTC 11168).